Reading from the N-terminus, the 1013-residue chain is Lysosomal alpha-mannosidase (1013 aa).

The N-terminal stretch at 1–49 (MGTGPLTSGVRAGGGNTGWLWMSSCNLGSPVLPISFLFWLLLAAPGARA) is a signal peptide. 2 cysteine pairs are disulfide-bonded: Cys-55-Cys-358 and Cys-268-Cys-273. 3 residues coordinate Zn(2+): His-72, Asp-74, and Asp-196. The active-site Nucleophile is the Asp-196. N-linked (GlcNAc...) asparagine glycosylation is found at Asn-310, Asn-345, and Asn-367. Cys-412 and Cys-472 form a disulfide bridge. Residue His-446 coordinates Zn(2+). Asn-489, Asn-497, Asn-544, Asn-633, Asn-646, Asn-693, Asn-767, and Asn-931 each carry an N-linked (GlcNAc...) asparagine glycan. The cysteines at positions 493 and 501 are disulfide-linked.

The protein belongs to the glycosyl hydrolase 38 family. The cofactor is Zn(2+).

Its subcellular location is the lysosome. It catalyses the reaction Hydrolysis of terminal, non-reducing alpha-D-mannose residues in alpha-D-mannosides.. In terms of biological role, necessary for the catabolism of N-linked carbohydrates released during glycoprotein turnover. The protein is Lysosomal alpha-mannosidase (Man2b1) of Mus musculus (Mouse).